The primary structure comprises 40 residues: Beta/delta-ctenitoxin-Pr1a (40 aa).

4 cysteine pairs are disulfide-bonded: cysteine 1–cysteine 15, cysteine 8–cysteine 21, cysteine 14–cysteine 31, and cysteine 23–cysteine 29.

Belongs to the neurotoxin 03 (Tx2) family. 05 subfamily. In terms of tissue distribution, expressed by the venom gland.

It localises to the secreted. In terms of biological role, potent insecticidal toxin that binds to two distinct sites in insect sodium channels, with close affinity (Kd1=34.7 pM and Kd2=35.1 pM). Its association is rather fast (1.4 and 8.5 minutes, respectively for sites 1 and 2) and its dissociation is a slower process (5.4 and 32.8 minutes, respectively). On rat brain synaptosomes the toxin partially competes (~30%) with the beta-toxin CssIV, but does not compete with the alpha-toxin AaII, nor with the beta-toxin Ts VII. On cockroach nerve cord synaptosomes, the toxin does not compete with the anti-insect toxin LqqIT1, but it competes with the 'alpha-like' toxin BomIV (IC(50)=80 pM). In cockroach neurons, the toxin inhibits the inactivation of sodium channels and it shifts the sodium channel activation to hyperpolarizing potentials. Hence, it behaves like an 'alpha-like' toxin and binds preferentially to site 3 on the insect Nav channel, located on the domain IV. The toxin may also inhibit the N-methyl-D-aspartate (NMDA)-subtype of ionotropic glutamate receptor (GRIN). In vivo, the toxin causes excitatory effects on insects. In Phoneutria reidyi (Brazilian Amazonian armed spider), this protein is Beta/delta-ctenitoxin-Pr1a.